The chain runs to 377 residues: Glutamate 5-kinase (377 aa).

Residue Lys22 participates in ATP binding. Substrate contacts are provided by Ser62, Asp149, and Asn161. Residues 181–182 (TD) and 223–229 (TGGMVTK) each bind ATP. The PUA domain maps to 285–359 (QGTLVADSGA…GRNTAQLKRF (75 aa)).

This sequence belongs to the glutamate 5-kinase family.

Its subcellular location is the cytoplasm. The enzyme catalyses L-glutamate + ATP = L-glutamyl 5-phosphate + ADP. It functions in the pathway amino-acid biosynthesis; L-proline biosynthesis; L-glutamate 5-semialdehyde from L-glutamate: step 1/2. Functionally, catalyzes the transfer of a phosphate group to glutamate to form L-glutamate 5-phosphate. This Bifidobacterium adolescentis (strain ATCC 15703 / DSM 20083 / NCTC 11814 / E194a) protein is Glutamate 5-kinase.